The sequence spans 419 residues: 4-hydroxyphenylpyruvate dioxygenase (419 aa).

2 VOC domains span residues 37–185 (GYDH…LLSR) and 216–376 (RIDH…LFTR). His-219, His-302, and Glu-387 together coordinate Fe cation.

The protein belongs to the 4HPPD family. It depends on Fe cation as a cofactor.

The enzyme catalyses 3-(4-hydroxyphenyl)pyruvate + O2 = homogentisate + CO2. It participates in amino-acid degradation; L-phenylalanine degradation; acetoacetate and fumarate from L-phenylalanine: step 3/6. In Pyricularia oryzae (strain 70-15 / ATCC MYA-4617 / FGSC 8958) (Rice blast fungus), this protein is 4-hydroxyphenylpyruvate dioxygenase (HPD4).